The sequence spans 203 residues: Holliday junction branch migration complex subunit RuvA (203 aa).

Residues 1–64 form a domain I region; it reads MIGRLNGILV…EDAQLLYGFI (64 aa). The domain II stretch occupies residues 65–143; sequence TKQERALFRL…SLLEASVGNE (79 aa). A flexible linker region spans residues 144–154; the sequence is REFMLQTNYTA. The tract at residues 155–203 is domain III; that stretch reads PAANAEEDAISALVSLGYKPPQASRAVSKAYKEGMDTETLIKLALKSML.

Belongs to the RuvA family. As to quaternary structure, homotetramer. Forms an RuvA(8)-RuvB(12)-Holliday junction (HJ) complex. HJ DNA is sandwiched between 2 RuvA tetramers; dsDNA enters through RuvA and exits via RuvB. An RuvB hexamer assembles on each DNA strand where it exits the tetramer. Each RuvB hexamer is contacted by two RuvA subunits (via domain III) on 2 adjacent RuvB subunits; this complex drives branch migration. In the full resolvosome a probable DNA-RuvA(4)-RuvB(12)-RuvC(2) complex forms which resolves the HJ.

It localises to the cytoplasm. The RuvA-RuvB-RuvC complex processes Holliday junction (HJ) DNA during genetic recombination and DNA repair, while the RuvA-RuvB complex plays an important role in the rescue of blocked DNA replication forks via replication fork reversal (RFR). RuvA specifically binds to HJ cruciform DNA, conferring on it an open structure. The RuvB hexamer acts as an ATP-dependent pump, pulling dsDNA into and through the RuvAB complex. HJ branch migration allows RuvC to scan DNA until it finds its consensus sequence, where it cleaves and resolves the cruciform DNA. The polypeptide is Holliday junction branch migration complex subunit RuvA (Shewanella denitrificans (strain OS217 / ATCC BAA-1090 / DSM 15013)).